We begin with the raw amino-acid sequence, 361 residues long: Cytosolic Fe-S cluster assembly factor CFD1 (361 aa).

37–44 provides a ligand contact to ATP; it reads GKGGVGKS. Residues Cys-218 and Cys-221 each coordinate [4Fe-4S] cluster. The tract at residues 293-314 is disordered; that stretch reads HSQSAAAQLPNSGDTESLTPAG.

This sequence belongs to the Mrp/NBP35 ATP-binding proteins family. NUBP2/CFD1 subfamily. As to quaternary structure, heterotetramer of 2 NBP35 and 2 CFD1 chains. [4Fe-4S] cluster serves as cofactor.

The protein resides in the cytoplasm. In terms of biological role, component of the cytosolic iron-sulfur (Fe/S) protein assembly (CIA) machinery. Required for maturation of extramitochondrial Fe-S proteins. The NBP35-CFD1 heterotetramer forms a Fe-S scaffold complex, mediating the de novo assembly of an Fe-S cluster and its transfer to target apoproteins. This Mycosarcoma maydis (Corn smut fungus) protein is Cytosolic Fe-S cluster assembly factor CFD1.